A 259-amino-acid polypeptide reads, in one-letter code: Polycomb group RING finger protein 1 (259 aa).

Ala-2 is modified (N-acetylalanine). Phosphoserine is present on Ser-3. Lys-24 is covalently cross-linked (Glycyl lysine isopeptide (Lys-Gly) (interchain with G-Cter in SUMO2)). Residues 47-86 (CCLCAGYFVDATTITECLHTFCKSCIVKYLQTSKYCPMCN) form an RING-type zinc finger. The tract at residues 86 to 247 (NIKIHETQPL…LSRWFGKPSP (162 aa)) is necessary for repressor activity. Lys-88 participates in a covalent cross-link: Glycyl lysine isopeptide (Lys-Gly) (interchain with G-Cter in SUMO2). The tract at residues 150–255 (LPFSSFDHSK…SPLLLQYSVK (106 aa)) is required for the interaction with the KDM2B-SKP1 heterodimeric complex. The tract at residues 167 to 255 (EQLSLCLERL…SPLLLQYSVK (89 aa)) is RING-finger and WD40-associated ubiquitin-like domain (RAWUL); sufficient for interaction with BCOR and BCORL1.

As to quaternary structure, interacts with BCORL1, forming heterodimers. The PCGF1-BCORL1 heterodimeric complex interacts with the KDM2B-SKP1 heterodimeric complex to form a homotetrameric polycomb repression complex 1 (PRC1.1). Component of the repressive BCOR complex containing a Polycomb group subcomplex at least composed of RYBP, RING1 and RNF2/RING2. Specifically interacts with BCOR, RING1 and RNF2/RING2. Component of a PRC1-like complex. Interacts with CBX6, CBX7 and CBX8. Interacts with DPPA4, NANOG, POU5F1 and RYBP.

The protein resides in the nucleus. Its function is as follows. Component of the Polycomb group (PcG) multiprotein BCOR complex, a complex required to maintain the transcriptionally repressive state of some genes, such as BCL6 and the cyclin-dependent kinase inhibitor, CDKN1A. Transcriptional repressor that may be targeted to the DNA by BCL6; this transcription repressor activity may be related to PKC signaling pathway. Represses CDKN1A expression by binding to its promoter, and this repression is dependent on the retinoic acid response element (RARE element). Promotes cell cycle progression and enhances cell proliferation as well. May have a positive role in tumor cell growth by down-regulating CDKN1A. Component of a Polycomb group (PcG) multiprotein PRC1-like complex, a complex class required to maintain the transcriptionally repressive state of many genes, including Hox genes, throughout development. PcG PRC1 complex acts via chromatin remodeling and modification of histones; it mediates monoubiquitination of histone H2A 'Lys-119', rendering chromatin heritably changed in its expressibility. Within the PRC1-like complex, regulates RNF2 ubiquitin ligase activity. Regulates the expression of DPPA4 and NANOG in the NT2 embryonic carcinoma cells. The sequence is that of Polycomb group RING finger protein 1 (Pcgf1) from Mus musculus (Mouse).